A 602-amino-acid chain; its full sequence is Glutamine--fructose-6-phosphate aminotransferase [isomerizing] (602 aa).

Cys2 serves as the catalytic Nucleophile; for GATase activity. The Glutamine amidotransferase type-2 domain maps to Cys2–Asp217. The interval Ile67 to Arg87 is disordered. Residues Lys77 to Arg87 are compositionally biased toward basic and acidic residues. SIS domains lie at Ile283–Asn422 and Val455–Pro592. Lys597 acts as the For Fru-6P isomerization activity in catalysis.

In terms of assembly, homodimer.

The protein resides in the cytoplasm. The catalysed reaction is D-fructose 6-phosphate + L-glutamine = D-glucosamine 6-phosphate + L-glutamate. Catalyzes the first step in hexosamine metabolism, converting fructose-6P into glucosamine-6P using glutamine as a nitrogen source. In Streptococcus pneumoniae (strain ATCC BAA-255 / R6), this protein is Glutamine--fructose-6-phosphate aminotransferase [isomerizing].